The primary structure comprises 438 residues: C4-dicarboxylate transport protein 1 (438 aa).

8 helical membrane-spanning segments follow: residues 20–42 (LYVQ…PSVA), 57–77 (LIKM…IAHI), 90–112 (ALFY…GNLV), 160–179 (VLQV…ALGK), 192–214 (AHAV…FGAM), 229–251 (LIGL…LGLI), 324–346 (LFIA…LLVA), and 361–383 (FITL…AIVF).

The protein belongs to the dicarboxylate/amino acid:cation symporter (DAACS) (TC 2.A.23) family.

Its subcellular location is the cell inner membrane. Functionally, responsible for the transport of dicarboxylates such as succinate, fumarate, and malate from the periplasm across the membrane. The chain is C4-dicarboxylate transport protein 1 from Bradyrhizobium diazoefficiens (strain JCM 10833 / BCRC 13528 / IAM 13628 / NBRC 14792 / USDA 110).